A 93-amino-acid polypeptide reads, in one-letter code: Large ribosomal subunit protein uL23cz/uL23cy (93 aa).

It belongs to the universal ribosomal protein uL23 family. In terms of assembly, part of the 50S ribosomal subunit.

It localises to the plastid. The protein resides in the chloroplast. Binds to 23S rRNA. This chain is Large ribosomal subunit protein uL23cz/uL23cy (rpl23-A), found in Oryza nivara (Indian wild rice).